Here is a 321-residue protein sequence, read N- to C-terminus: Cytochrome f (321 aa).

An N-terminal signal peptide occupies residues 1–35 (MQNRKTYDDWVKKWITQSISVLIMIDIMTRTSIAN). Heme-binding residues include Y37, C57, C60, and H61. A helical membrane pass occupies residues 287-307 (VQGLLLFLASVVLAQIFLVLK).

The protein belongs to the cytochrome f family. As to quaternary structure, the 4 large subunits of the cytochrome b6-f complex are cytochrome b6, subunit IV (17 kDa polypeptide, petD), cytochrome f and the Rieske protein, while the 4 small subunits are PetG, PetL, PetM and PetN. The complex functions as a dimer. It depends on heme as a cofactor.

The protein localises to the plastid. Its subcellular location is the chloroplast thylakoid membrane. In terms of biological role, component of the cytochrome b6-f complex, which mediates electron transfer between photosystem II (PSII) and photosystem I (PSI), cyclic electron flow around PSI, and state transitions. The polypeptide is Cytochrome f (Cryptomeria japonica (Japanese cedar)).